The sequence spans 137 residues: Putative pre-16S rRNA nuclease (137 aa).

Belongs to the YqgF nuclease family.

It localises to the cytoplasm. Its function is as follows. Could be a nuclease involved in processing of the 5'-end of pre-16S rRNA. The sequence is that of Putative pre-16S rRNA nuclease from Clostridium botulinum (strain Alaska E43 / Type E3).